Here is a 702-residue protein sequence, read N- to C-terminus: Polyribonucleotide nucleotidyltransferase (702 aa).

D487 and D493 together coordinate Mg(2+). The region spanning 554–613 is the KH domain; it reads PRLLTIKIHPDKIREVIGKGGSTIQAITKETGTQIDIQDDGTIVIASVNAIAAQAAKARI. The S1 motif domain occupies 623-691; it reads GRIYEGKVAK…KQGRIRLSMK (69 aa).

It belongs to the polyribonucleotide nucleotidyltransferase family. Component of the RNA degradosome, which is a multiprotein complex involved in RNA processing and mRNA degradation. The cofactor is Mg(2+).

It localises to the cytoplasm. It carries out the reaction RNA(n+1) + phosphate = RNA(n) + a ribonucleoside 5'-diphosphate. In terms of biological role, involved in mRNA degradation. Catalyzes the phosphorolysis of single-stranded polyribonucleotides processively in the 3'- to 5'-direction. The polypeptide is Polyribonucleotide nucleotidyltransferase (Stenotrophomonas maltophilia (strain K279a)).